Consider the following 228-residue polypeptide: NOI-like protein (228 aa).

The span at 56–75 shows a compositional bias: basic and acidic residues; that stretch reads AQDHQHSEKHHNDTSTDYHV. 2 disordered regions span residues 56–87 and 99–133; these read AQDH…HRRE and RPHR…RNSD. Basic residues predominate over residues 76 to 86; it reads VKQHRRKHHRR. Residues 118–133 are compositionally biased toward polar residues; it reads HGTSATMSSSVKRNSD.

Belongs to the RIN4 family.

In Elaeis oleifera (American oil palm), this protein is NOI-like protein.